The following is a 453-amino-acid chain: tRNA modification GTPase MnmE (453 aa).

Residues Arg22, Glu79, and Lys119 each contribute to the (6S)-5-formyl-5,6,7,8-tetrahydrofolate site. The region spanning 215–376 (GMKVVIAGRP…LKQHLKSLMG (162 aa)) is the TrmE-type G domain. K(+) is bound at residue Asn225. GTP contacts are provided by residues 225-230 (NAGKSS), 244-250 (TEIAGTT), 269-272 (DTAG), and 334-337 (NKAD). Position 229 (Ser229) interacts with Mg(2+). 3 residues coordinate K(+): Thr244, Ile246, and Thr249. Residue Thr250 coordinates Mg(2+). Residue Lys453 participates in (6S)-5-formyl-5,6,7,8-tetrahydrofolate binding.

Belongs to the TRAFAC class TrmE-Era-EngA-EngB-Septin-like GTPase superfamily. TrmE GTPase family. Homodimer. Heterotetramer of two MnmE and two MnmG subunits. The cofactor is K(+).

Its subcellular location is the cytoplasm. Exhibits a very high intrinsic GTPase hydrolysis rate. Involved in the addition of a carboxymethylaminomethyl (cmnm) group at the wobble position (U34) of certain tRNAs, forming tRNA-cmnm(5)s(2)U34. The protein is tRNA modification GTPase MnmE of Shewanella baltica (strain OS155 / ATCC BAA-1091).